The following is a 175-amino-acid chain: DPY30 domain-containing protein 1 (175 aa).

Basic and acidic residues predominate over residues 94–112 (QQKEKQKSEDFETGQEKSF). Disordered regions lie at residues 94–134 (QQKE…QAEE) and 152–175 (APNL…SAPP).

Belongs to the dpy-30 family. Component of the axonemal radial spoke complex 1 (RS1), at least composed of spoke head proteins RSPH1, RSPH3, RSPH9 and the cilia-specific component RSPH4A or sperm-specific component RSPH6A, spoke stalk proteins RSPH14, DNAJB13, DYDC1, ROPN1L and NME5, and the anchor protein IQUB. Interacts with SH3GL3.

The protein localises to the cytoplasm. The protein resides in the cytoskeleton. It is found in the flagellum axoneme. Its function is as follows. Functions as part of axonemal radial spoke complexes that play an important part in the motility of sperm and cilia. Plays a crucial role during acrosome biogenesis. This chain is DPY30 domain-containing protein 1 (Dydc1), found in Mus musculus (Mouse).